The primary structure comprises 149 residues: Large ribosomal subunit protein uL15 (149 aa).

Over residues 1–28 (MVIKIHDLRPAPGSKRDKIRVGRGEGSK) the composition is skewed to basic and acidic residues. A disordered region spans residues 1–54 (MVIKIHDLRPAPGSKRDKIRVGRGEGSKGKTAGRGTKGTKARKNVSPRFEGGQM).

This sequence belongs to the universal ribosomal protein uL15 family. As to quaternary structure, part of the 50S ribosomal subunit.

Functionally, binds to the 23S rRNA. This chain is Large ribosomal subunit protein uL15, found in Saccharopolyspora erythraea (strain ATCC 11635 / DSM 40517 / JCM 4748 / NBRC 13426 / NCIMB 8594 / NRRL 2338).